The sequence spans 317 residues: L-lactate dehydrogenase (317 aa).

NAD(+) is bound by residues 16–17 (FV), Asp38, Lys43, Tyr69, and 83–84 (GA). Gln86 and Arg92 together coordinate substrate. NAD(+) is bound by residues Ser105, 122–124 (ATN), and Ser147. 124 to 127 (NPVD) contacts substrate. Substrate is bound at residue 152-155 (DTAR). Beta-D-fructose 1,6-bisphosphate contacts are provided by residues Arg157 and 169–172 (QNVH). The active-site Proton acceptor is His179. Tyr224 bears the Phosphotyrosine mark. Thr233 provides a ligand contact to substrate.

It belongs to the LDH/MDH superfamily. LDH family. Exists as a dimer and a tetramer (dimer of dimers). The conversion occurs via the binding of fructose 1,6-bisphosphate (FBP) to the dimer.

Its subcellular location is the cytoplasm. It carries out the reaction (S)-lactate + NAD(+) = pyruvate + NADH + H(+). The protein operates within fermentation; pyruvate fermentation to lactate; (S)-lactate from pyruvate: step 1/1. Its activity is regulated as follows. Allosterically activated by fructose 1,6-bisphosphate (FBP). The improvement in affinity for substrate occurs in two steps; the binding of fructose 1,6-bisphosphate (FBP) to the dimer, and the dimer to tetramer conversion. Catalyzes the conversion of lactate to pyruvate. The chain is L-lactate dehydrogenase from Geobacillus stearothermophilus (Bacillus stearothermophilus).